The primary structure comprises 373 residues: tRNA N6-adenosine threonylcarbamoyltransferase (373 aa).

Residues His128, His132, and Tyr149 each coordinate a divalent metal cation. Substrate is bound by residues 149–153 (YVSGG), Asp181, Gly196, Glu200, and Asn302. An a divalent metal cation-binding site is contributed by Asp331.

It belongs to the KAE1 / TsaD family. In terms of assembly, component of the EKC/KEOPS complex composed of at least BUD32, CGI121, GON7, KAE1 and PCC1; the whole complex dimerizes. The cofactor is a divalent metal cation.

Its subcellular location is the cytoplasm. The protein localises to the nucleus. It catalyses the reaction L-threonylcarbamoyladenylate + adenosine(37) in tRNA = N(6)-L-threonylcarbamoyladenosine(37) in tRNA + AMP + H(+). Functionally, component of the EKC/KEOPS complex that is required for the formation of a threonylcarbamoyl group on adenosine at position 37 (t(6)A37) in tRNAs that read codons beginning with adenine. The complex is probably involved in the transfer of the threonylcarbamoyl moiety of threonylcarbamoyl-AMP (TC-AMP) to the N6 group of A37. KAE1 likely plays a direct catalytic role in this reaction, but requires other protein(s) of the complex to fulfill this activity. The EKC/KEOPS complex also promotes both telomere uncapping and telomere elongation. The complex is required for efficient recruitment of transcriptional coactivators. The chain is tRNA N6-adenosine threonylcarbamoyltransferase from Candida glabrata (strain ATCC 2001 / BCRC 20586 / JCM 3761 / NBRC 0622 / NRRL Y-65 / CBS 138) (Yeast).